The chain runs to 257 residues: UPF0246 protein YaaA (257 aa).

Belongs to the UPF0246 family.

This chain is UPF0246 protein YaaA, found in Salmonella agona (strain SL483).